The sequence spans 225 residues: MSMIQNDWLDSIGEEFHKPYYKQLYDFVKEEYSQTTIYPLAENIFNAFHFTPLSKVKVLILGQDPYHNVNQAHGLSFSVLPEQKDIPPSLQNIYKELQSDLGCFIPNNGYLKKWADQGVLLLNTVLTVRAHQANSHQGRGWEQFTNAIIQAVNQQDRPIVYLLWGKPAQSKIPMLTNPKHLILKAPHPSPLSSYRGFFGSKHFSQTNEFFNANGLEPIDWQIENI.

The active-site Proton acceptor is the D64.

It belongs to the uracil-DNA glycosylase (UDG) superfamily. UNG family.

The protein localises to the cytoplasm. The catalysed reaction is Hydrolyzes single-stranded DNA or mismatched double-stranded DNA and polynucleotides, releasing free uracil.. In terms of biological role, excises uracil residues from the DNA which can arise as a result of misincorporation of dUMP residues by DNA polymerase or due to deamination of cytosine. The sequence is that of Uracil-DNA glycosylase from Lachnoclostridium phytofermentans (strain ATCC 700394 / DSM 18823 / ISDg) (Clostridium phytofermentans).